A 480-amino-acid chain; its full sequence is 2-phosphoxylose phosphatase 1 (480 aa).

Residues 1–6 (MLHRNR) lie on the Cytoplasmic side of the membrane. Residues 7–27 (FLVLLALAGLLAFLSLSLQFF) traverse the membrane as a helical; Signal-anchor for type II membrane protein segment. Topologically, residues 28 to 480 (HLIPVSATKN…YYDACHGEGA (453 aa)) are lumenal. His97 serves as the catalytic Nucleophile. Residues Asn194, Asn305, and Asn354 are each glycosylated (N-linked (GlcNAc...) asparagine). The Proton donor role is filled by Asp379.

Belongs to the histidine acid phosphatase family. As to quaternary structure, interacts with B3GAT3; the interaction increases the 2-phosphoxylose phosphatase activity of PXYLP1 during completion of linkage region formation in a B3GAT3-mediated manner.

It is found in the golgi apparatus membrane. It carries out the reaction 3-O-[beta-D-GlcA-(1-&gt;3)-beta-D-Gal-(1-&gt;3)-beta-D-Gal-(1-&gt;4)-beta-D-2-O-P-Xyl]-L-seryl-[protein] + H2O = 3-O-(beta-D-GlcA-(1-&gt;3)-beta-D-Gal-(1-&gt;3)-beta-D-Gal-(1-&gt;4)-beta-D-Xyl)-L-seryl-[protein] + phosphate. Its function is as follows. Responsible for the 2-O-dephosphorylation of xylose in the glycosaminoglycan-protein linkage region of proteoglycans thereby regulating the amount of mature glycosaminoglycan (GAG) chains. Sulfated glycosaminoglycans (GAGs), including heparan sulfate and chondroitin sulfate, are synthesized on the so-called common GAG-protein linkage region (GlcUAbeta1-3Galbeta1-3Galbeta1-4Xylbeta1-O-Ser) of core proteins, which is formed by the stepwise addition of monosaccharide residues by the respective specific glycosyltransferases. Xylose 2-O-dephosphorylation during completion of linkage region formation is a prerequisite for the initiation and efficient elongation of the repeating disaccharide region of GAG chains. In Mus musculus (Mouse), this protein is 2-phosphoxylose phosphatase 1.